The following is a 468-amino-acid chain: Adenylosuccinate synthetase (468 aa).

GTP is bound by residues 23–29 (GDEGKGK) and 51–53 (GHE). The active-site Proton acceptor is the aspartate 24. The Mg(2+) site is built by aspartate 24 and glycine 51. Residues 24-27 (DEGK), 49-52 (NSGH), threonine 142, arginine 156, asparagine 238, threonine 253, and arginine 317 contribute to the IMP site. The active-site Proton donor is histidine 52. 313–319 (VTTGRTR) lines the substrate pocket. Residues arginine 319 and 345–347 (KLD) contribute to the GTP site.

This sequence belongs to the adenylosuccinate synthetase family. In terms of assembly, homodimer. It depends on Mg(2+) as a cofactor.

Its subcellular location is the cytoplasm. It carries out the reaction IMP + L-aspartate + GTP = N(6)-(1,2-dicarboxyethyl)-AMP + GDP + phosphate + 2 H(+). It participates in purine metabolism; AMP biosynthesis via de novo pathway; AMP from IMP: step 1/2. Functionally, plays an important role in the salvage pathway for purine nucleotide biosynthesis. Catalyzes the first committed step in the biosynthesis of AMP from IMP. The sequence is that of Adenylosuccinate synthetase from Theileria annulata.